Here is a 374-residue protein sequence, read N- to C-terminus: Fasciclin-like arabinogalactan protein CTB11 (374 aa).

An N-terminal signal peptide occupies residues 1–18 (MHFPALAVAGCLLSRATA). FAS1 domains lie at 19–171 (QSLD…DANM) and 173–302 (LPHN…DGAL). N-linked (GlcNAc...) asparagine glycosylation is found at N52, N72, N120, N132, and N176. The helical transmembrane segment at 328-348 (ILASHQLTLLAVLAMALVSIL) threads the bilayer.

This sequence belongs to the fasciclin-like AGP family.

It localises to the membrane. It functions in the pathway mycotoxin biosynthesis. Fasciclin-like arabinogalactan protein; part of the gene cluster that mediates the biosynthesis of cercosporin, a light-activated, non-host-selective toxin. The perylenequinone chromophore of cercosporin absorbs light energy to attain an electronically-activated triplet state and produces active oxygen species such as the hydroxyl radical, superoxide, hydrogen peroxide or singlet oxygen upon reaction with oxygen molecules. These reactive oxygen species cause damage to various cellular components including lipids, proteins and nucleic acids. The first step of cercosporin biosynthesis is performed by the polyketide synthase CTB1 which catalyzes the formation of nor-toralactone. The starter unit acyltransferase (SAT) domain of CTB1 initiates polyketide extension by the selective utilization of acetyl-CoA, which is elongated to the heptaketide in the beta-ketoacyl synthase (KS) domain by successive condensations with six malonyl units introduced by the malonyl acyltransferase (MAT) domain. The product template (PT) domain catalyzes C4-C9 and C2-C11 aldol cyclizations and dehydrations to a trihydroxynaphthalene, which is thought to be delivered to the thioesterase (TE) domain for product release. The bifunctional enzyme CTB3 then methylates nor-toralactone to toralactone before conducting an unusual oxidative aromatic ring opening. The O-methyltransferase CTB2 further methylates the nascent OH-6 of the CBT3 product, blocking further oxidation at this site before the reductase CTB6 reduces the 2-oxopropyl ketone at position C7, giving naphthalene. The FAD-dependent monooxygenase CTB5 in concert with the multicopper oxidase CTB12 are responsible for homodimerization of naphthalene with CTB7 installing the dioxepine moiety, finally producing cercosporin. The fasciclin domain-containing protein CTB11 might act with CTB5 and CTB12 whereas the roles of CTB9 and CTB10 have still to be elucidated. In Cercospora beticola (Sugarbeet leaf spot fungus), this protein is Fasciclin-like arabinogalactan protein CTB11.